The following is a 163-amino-acid chain: uncharacterized protein (163 aa).

Positions 136–161 (QKYIENHQKEINEHVEKLRTLHKELR) form a coiled coil.

This is an uncharacterized protein from Acanthamoeba polyphaga (Amoeba).